Here is a 316-residue protein sequence, read N- to C-terminus: Beta-galactosidase small subunit (316 aa).

It belongs to the bacterial beta-galactosidase small subunit family. Heterodimer of a large (LacL) and a small subunit (LacM).

The catalysed reaction is Hydrolysis of terminal non-reducing beta-D-galactose residues in beta-D-galactosides.. Functionally, component of a beta-galactosidase. The polypeptide is Beta-galactosidase small subunit (lacM) (Lactobacillus acidophilus (strain ATCC 700396 / NCK56 / N2 / NCFM)).